The following is a 371-amino-acid chain: DNA replication and repair protein RecF (371 aa).

ATP is bound at residue glycine 30–threonine 37.

The protein belongs to the RecF family.

Its subcellular location is the cytoplasm. Functionally, the RecF protein is involved in DNA metabolism; it is required for DNA replication and normal SOS inducibility. RecF binds preferentially to single-stranded, linear DNA. It also seems to bind ATP. The polypeptide is DNA replication and repair protein RecF (Lacticaseibacillus paracasei (strain ATCC 334 / BCRC 17002 / CCUG 31169 / CIP 107868 / KCTC 3260 / NRRL B-441) (Lactobacillus paracasei)).